The following is a 611-amino-acid chain: Phosphoenolpyruvate carboxykinase [GTP] (611 aa).

Substrate-binding positions include Arg82 and 222–224; that span reads YGG. Mn(2+) is bound by residues Lys231 and His251. Ser273 is a binding site for substrate. Residue 274-279 coordinates GTP; sequence ACGKTN. Cys275 is a catalytic residue. Asp298 contacts Mn(2+). 389-391 contacts substrate; that stretch reads NSR. Residues Arg391, Arg422, and 517-520 contribute to the GTP site; that span reads FGDN.

Belongs to the phosphoenolpyruvate carboxykinase [GTP] family. In terms of assembly, monomer. It depends on Mn(2+) as a cofactor.

The protein resides in the cytoplasm. The catalysed reaction is oxaloacetate + GTP = phosphoenolpyruvate + GDP + CO2. Its pathway is carbohydrate biosynthesis; gluconeogenesis. Catalyzes the conversion of oxaloacetate (OAA) to phosphoenolpyruvate (PEP), the rate-limiting step in the metabolic pathway that produces glucose from lactate and other precursors derived from the citric acid cycle. The sequence is that of Phosphoenolpyruvate carboxykinase [GTP] from Arthrobacter sp. (strain FB24).